The sequence spans 329 residues: 4-diphosphocytidyl-2-C-methyl-D-erythritol kinase (329 aa).

Lys14 is an active-site residue. 117-127 (PSGAGMGGASS) contacts ATP. Residue Asp166 is part of the active site.

Belongs to the GHMP kinase family. IspE subfamily.

It catalyses the reaction 4-CDP-2-C-methyl-D-erythritol + ATP = 4-CDP-2-C-methyl-D-erythritol 2-phosphate + ADP + H(+). It functions in the pathway isoprenoid biosynthesis; isopentenyl diphosphate biosynthesis via DXP pathway; isopentenyl diphosphate from 1-deoxy-D-xylulose 5-phosphate: step 3/6. In terms of biological role, catalyzes the phosphorylation of the position 2 hydroxy group of 4-diphosphocytidyl-2C-methyl-D-erythritol. This is 4-diphosphocytidyl-2-C-methyl-D-erythritol kinase from Rhodopirellula baltica (strain DSM 10527 / NCIMB 13988 / SH1).